A 201-amino-acid chain; its full sequence is uncharacterized protein (201 aa).

2 coiled-coil regions span residues 3–43 and 76–120; these read YMDD…EVYK and TGQV…AKTK.

This is an uncharacterized protein from Archaeoglobus fulgidus (strain ATCC 49558 / DSM 4304 / JCM 9628 / NBRC 100126 / VC-16).